A 202-amino-acid chain; its full sequence is Endothelin-1 (202 aa).

The first 25 residues, 1 to 25 (MDYLPVLFSLLLVVFQGAPEAAVLG), serve as a signal peptide directing secretion. The propeptide occupies 26-50 (AELSTGPDSGGEKPAPSAPWRPRRS). A disordered region spans residues 28 to 48 (LSTGPDSGGEKPAPSAPWRPR). 2 disulfides stabilise this stretch: C53/C67 and C55/C63. Residues 74 to 202 (VNTPEHIVPY…EKKVTHNRTH (129 aa)) constitute a propeptide that is removed on maturation. Residues 110 to 124 (CQCASQKDKKCWTFC) form an endothelin-like region.

Belongs to the endothelin/sarafotoxin family.

It localises to the secreted. Functionally, endothelins are endothelium-derived vasoconstrictor peptides. Probable ligand for G-protein coupled receptors EDNRA and EDNRB which activates PTK2B, BCAR1, BCAR3 and, GTPases RAP1 and RHOA cascade in glomerular mesangial cells. Also binds the DEAR/FBXW7-AS1 receptor. Promotes mesenteric arterial wall remodeling via activation of ROCK signaling and subsequent colocalization of NFATC3 with F-actin filaments. NFATC3 then translocates to the nucleus where it subsequently promotes the transcription of the smooth muscle hypertrophy and differentiation marker ACTA2. The polypeptide is Endothelin-1 (EDN1) (Felis catus (Cat)).